The following is a 626-amino-acid chain: DNA-directed RNA polymerase subunit gamma (626 aa).

Positions 71, 73, 86, and 89 each coordinate Zn(2+). Mg(2+)-binding residues include D467, D469, and D471.

It belongs to the RNA polymerase beta' chain family. RpoC1 subfamily. As to quaternary structure, in cyanobacteria the RNAP catalytic core is composed of 2 alpha, 1 beta, 1 beta', 1 gamma and 1 omega subunit. When a sigma factor is associated with the core the holoenzyme is formed, which can initiate transcription. Mg(2+) is required as a cofactor. The cofactor is Zn(2+).

The enzyme catalyses RNA(n) + a ribonucleoside 5'-triphosphate = RNA(n+1) + diphosphate. In terms of biological role, DNA-dependent RNA polymerase catalyzes the transcription of DNA into RNA using the four ribonucleoside triphosphates as substrates. This chain is DNA-directed RNA polymerase subunit gamma, found in Synechocystis sp. (strain ATCC 27184 / PCC 6803 / Kazusa).